A 461-amino-acid chain; its full sequence is Epidermin leader peptide-processing serine protease EpiP (461 aa).

The signal sequence occupies residues 1-23; that stretch reads MNKFKFFIVFLILSLVFLQNEYA. In terms of domain architecture, Peptidase S8 spans 121 to 459; the sequence is QWDMRKITNE…NGKLDVYKLL (339 aa). Residues D149, H194, and S402 each act as charge relay system in the active site.

The protein belongs to the peptidase S8 family.

It functions in the pathway antibiotic biosynthesis; epidermin biosynthesis. Protease which cleaves the matured lantibiotic from the modified prepeptide. The sequence is that of Epidermin leader peptide-processing serine protease EpiP (epiP) from Staphylococcus epidermidis.